A 269-amino-acid polypeptide reads, in one-letter code: MTAITSRELTLGYASQTIIDNLDIQLPKGKVSVLIGSNGCGKSTLLKSFARLLKPLKGAVILNGEDIHRQSTAAVARELAILPQMPDAPEGITVKQLVSLGRYPYQNWLQQWSEQDEAMVNQALRQTGTDMLAERPVDALSGGQRQRVWIAMTLAQDTEVVLLDEPTTFLDLAHQIEVLDLLRELNRQHGKTIIMVLHDLNLACRYADHMVAVHNRTAFAQGAPAEILDEALVKTVFNLDCRIVPDPFFHTPLCIPFGREKPQERATVA.

In terms of domain architecture, ABC transporter spans 4–240 (ITSRELTLGY…ALVKTVFNLD (237 aa)). Residue 36–43 (GSNGCGKS) participates in ATP binding.

This sequence belongs to the ABC transporter superfamily.

The protein localises to the cell inner membrane. Functionally, part of the binding-protein-dependent transport system CbrABCD for uptake of the siderophore achromobactin. Probably responsible for energy coupling to the transport system. In Dickeya dadantii (strain 3937) (Erwinia chrysanthemi (strain 3937)), this protein is Achromobactin transport ATP-binding protein CbrD (cbrD).